The following is a 146-amino-acid chain: Acidic phospholipase A2 2 (146 aa).

The signal sequence occupies residues Met1–Ser21. Residues Ser22–Leu27 constitute a propeptide that is removed on maturation. Intrachain disulfides connect Cys38/Cys98, Cys53/Cys145, Cys55/Cys71, Cys70/Cys126, Cys77/Cys119, Cys87/Cys112, and Cys105/Cys117. Ca(2+)-binding residues include Tyr54, Gly56, and Gly58. His74 is an active-site residue. Asp75 serves as a coordination point for Ca(2+). Asp120 is an active-site residue.

Belongs to the phospholipase A2 family. Group I subfamily. D49 sub-subfamily. The cofactor is Ca(2+). In terms of tissue distribution, expressed by the venom gland.

The protein localises to the secreted. The catalysed reaction is a 1,2-diacyl-sn-glycero-3-phosphocholine + H2O = a 1-acyl-sn-glycero-3-phosphocholine + a fatty acid + H(+). PLA2 catalyzes the calcium-dependent hydrolysis of the 2-acyl groups in 3-sn-phosphoglycerides. The protein is Acidic phospholipase A2 2 of Naja atra (Chinese cobra).